Reading from the N-terminus, the 432-residue chain is Amino-acid acetyltransferase (432 aa).

The region spanning 286 to 425 (ELVREAAIED…ASLYNFQRNS (140 aa)) is the N-acetyltransferase domain.

It belongs to the acetyltransferase family. ArgA subfamily.

The protein resides in the cytoplasm. It carries out the reaction L-glutamate + acetyl-CoA = N-acetyl-L-glutamate + CoA + H(+). Its pathway is amino-acid biosynthesis; L-arginine biosynthesis; N(2)-acetyl-L-ornithine from L-glutamate: step 1/4. The sequence is that of Amino-acid acetyltransferase from Pseudomonas syringae pv. tomato (strain ATCC BAA-871 / DC3000).